We begin with the raw amino-acid sequence, 319 residues long: tRNA (guanine-N(7)-)-methyltransferase (319 aa).

The segment at 1 to 44 is disordered; it reads MSESPETPEPSPAQSPEAAPEQPQAARPVTPGSQASFGTYGGRP. A compositionally biased stretch (low complexity) spans 14–26; the sequence is QSPEAAPEQPQAA. Residues glutamate 103, glutamate 128, asparagine 155, and aspartate 178 each coordinate S-adenosyl-L-methionine. Aspartate 178 is an active-site residue. Residues lysine 182 and aspartate 214 each contribute to the substrate site. Residues 262–288 are disordered; the sequence is APVKEGRAPVSTEHTGPNEGVDETGGW. Residue 298–301 coordinates substrate; that stretch reads TSFE.

It belongs to the class I-like SAM-binding methyltransferase superfamily. TrmB family.

It catalyses the reaction guanosine(46) in tRNA + S-adenosyl-L-methionine = N(7)-methylguanosine(46) in tRNA + S-adenosyl-L-homocysteine. Its pathway is tRNA modification; N(7)-methylguanine-tRNA biosynthesis. Catalyzes the formation of N(7)-methylguanine at position 46 (m7G46) in tRNA. The sequence is that of tRNA (guanine-N(7)-)-methyltransferase from Arthrobacter sp. (strain FB24).